The sequence spans 496 residues: Xylulose kinase (496 aa).

83–84 (MH) provides a ligand contact to substrate. Asp237 acts as the Proton acceptor in catalysis.

Belongs to the FGGY kinase family.

The enzyme catalyses D-xylulose + ATP = D-xylulose 5-phosphate + ADP + H(+). Catalyzes the phosphorylation of D-xylulose to D-xylulose 5-phosphate. The protein is Xylulose kinase of Staphylococcus epidermidis (strain ATCC 12228 / FDA PCI 1200).